A 363-amino-acid polypeptide reads, in one-letter code: Phosphoserine aminotransferase (363 aa).

R42 lines the L-glutamate pocket. Pyridoxal 5'-phosphate-binding positions include 76 to 77 (GR), W102, T156, D175, and Q198. K199 bears the N6-(pyridoxal phosphate)lysine mark. 240–241 (NT) lines the pyridoxal 5'-phosphate pocket.

The protein belongs to the class-V pyridoxal-phosphate-dependent aminotransferase family. SerC subfamily. Homodimer. Pyridoxal 5'-phosphate serves as cofactor.

It is found in the cytoplasm. It catalyses the reaction O-phospho-L-serine + 2-oxoglutarate = 3-phosphooxypyruvate + L-glutamate. It carries out the reaction 4-(phosphooxy)-L-threonine + 2-oxoglutarate = (R)-3-hydroxy-2-oxo-4-phosphooxybutanoate + L-glutamate. It participates in amino-acid biosynthesis; L-serine biosynthesis; L-serine from 3-phospho-D-glycerate: step 2/3. It functions in the pathway cofactor biosynthesis; pyridoxine 5'-phosphate biosynthesis; pyridoxine 5'-phosphate from D-erythrose 4-phosphate: step 3/5. In terms of biological role, catalyzes the reversible conversion of 3-phosphohydroxypyruvate to phosphoserine and of 3-hydroxy-2-oxo-4-phosphonooxybutanoate to phosphohydroxythreonine. The protein is Phosphoserine aminotransferase of Shewanella frigidimarina (strain NCIMB 400).